Consider the following 232-residue polypeptide: Large ribosomal subunit protein uL1 (232 aa).

This sequence belongs to the universal ribosomal protein uL1 family. Part of the 50S ribosomal subunit.

Binds directly to 23S rRNA. The L1 stalk is quite mobile in the ribosome, and is involved in E site tRNA release. Its function is as follows. Protein L1 is also a translational repressor protein, it controls the translation of the L11 operon by binding to its mRNA. The sequence is that of Large ribosomal subunit protein uL1 from Amoebophilus asiaticus (strain 5a2).